A 284-amino-acid chain; its full sequence is 2-dehydro-3-deoxyphosphooctonate aldolase (284 aa).

This sequence belongs to the KdsA family.

The protein resides in the cytoplasm. It carries out the reaction D-arabinose 5-phosphate + phosphoenolpyruvate + H2O = 3-deoxy-alpha-D-manno-2-octulosonate-8-phosphate + phosphate. The protein operates within carbohydrate biosynthesis; 3-deoxy-D-manno-octulosonate biosynthesis; 3-deoxy-D-manno-octulosonate from D-ribulose 5-phosphate: step 2/3. It functions in the pathway bacterial outer membrane biogenesis; lipopolysaccharide biosynthesis. This chain is 2-dehydro-3-deoxyphosphooctonate aldolase, found in Sodalis glossinidius (strain morsitans).